Here is a 215-residue protein sequence, read N- to C-terminus: Thymidylate kinase (215 aa).

11–18 (GIDGAGKS) provides a ligand contact to ATP.

It belongs to the thymidylate kinase family.

It catalyses the reaction dTMP + ATP = dTDP + ADP. In terms of biological role, phosphorylation of dTMP to form dTDP in both de novo and salvage pathways of dTTP synthesis. The protein is Thymidylate kinase of Nitrosomonas europaea (strain ATCC 19718 / CIP 103999 / KCTC 2705 / NBRC 14298).